A 1168-amino-acid chain; its full sequence is DNA-directed RNA polymerase subunit beta (1168 aa).

This sequence belongs to the RNA polymerase beta chain family. The RNAP catalytic core consists of 2 alpha, 1 beta, 1 beta' and 1 omega subunit. When a sigma factor is associated with the core the holoenzyme is formed, which can initiate transcription.

The enzyme catalyses RNA(n) + a ribonucleoside 5'-triphosphate = RNA(n+1) + diphosphate. In terms of biological role, DNA-dependent RNA polymerase catalyzes the transcription of DNA into RNA using the four ribonucleoside triphosphates as substrates. The polypeptide is DNA-directed RNA polymerase subunit beta (Rhodococcus opacus (strain B4)).